The primary structure comprises 530 residues: MARAAVLPPSRLSPTLPLLPLLLLLLQETGAQDVRVRVLPEVRGRLGGTVELPCHLLPPTTERVSQVTWQRLDGTVVAAFHPSFGVDFPNSQFSKDRLSFVRARPETNADLRDATLAFRGLRVEDEGNYTCEFATFPNGTRRGVTWLRVIAQPENHAEAQEVTIGPQSVAVARCVSTGGRPPARITWISSLGGEAKDTQEPGIQAGTVTIISRYSLVPVGRADGVKVTCRVEHESFEEPILLPVTLSVRYPPEVSISGYDDNWYLGRSEAILTCDVRSNPEPTDYDWSTTSGVFPASAVAQGSQLLVHSVDRMVNTTFICTATNAVGTGRAEQVILVRESPSTAGAGATGGIIGGIIAAIIATAVAGTGILICRQQRKEQRLQAADEEEELEGPPSYKPPTPKAKLEEPEMPSQLFTLGASEHSPVKTPYFDAGVSCADQEMPRYHELPTLEERSGPLLLGATGLGPSLLVPPGPNVVEGVSLSLEDEEEDDEEEDFLDKINPIYDALSYPSPSDSYQSKDFFVSRAMYV.

Residues 1–31 (MARAAVLPPSRLSPTLPLLPLLLLLLQETGA) form the signal peptide. Residues 32-147 (QDVRVRVLPE…NGTRRGVTWL (116 aa)) form the Ig-like V-type domain. At 32-351 (QDVRVRVLPE…STAGAGATGG (320 aa)) the chain is on the extracellular side. Residues cysteine 54 and cysteine 131 are joined by a disulfide bond. 2 N-linked (GlcNAc...) asparagine glycosylation sites follow: asparagine 128 and asparagine 138. Ig-like C2-type domains lie at 153–247 (PENH…VTLS) and 252–337 (PEVS…VILV). Cystine bridges form between cysteine 174–cysteine 229 and cysteine 274–cysteine 320. N-linked (GlcNAc...) asparagine glycosylation occurs at asparagine 315. The chain crosses the membrane as a helical span at residues 352-372 (IIGGIIAAIIATAVAGTGILI). Topologically, residues 373-530 (CRQQRKEQRL…DFFVSRAMYV (158 aa)) are cytoplasmic. The disordered stretch occupies residues 382–407 (LQAADEEEELEGPPSYKPPTPKAKLE). Phosphothreonine is present on threonine 401. At serine 424 the chain carries Phosphoserine.

This sequence belongs to the nectin family. In terms of assembly, can form trans-heterodimers with NECTIN3. Interacts with CD226 or with PVRIG; these interactions are competitive and have a differential functional outcome on T-cell activation, either positive or negative, respectively. Binds with low affinity to TIGIT. As to expression, brain, spinal cord, spleen, kidney, heart and liver.

It is found in the cell membrane. In terms of biological role, modulator of T-cell signaling. Can be either a costimulator of T-cell function, or a coinhibitor, depending on the receptor it binds to. Upon binding to CD226, stimulates T-cell proliferation and cytokine production, including that of IL2, IL5, IL10, IL13, and IFNG. Upon interaction with PVRIG, inhibits T-cell proliferation. These interactions are competitive. Probable cell adhesion protein. The protein is Nectin-2 of Mus musculus (Mouse).